The sequence spans 220 residues: Glycerol-3-phosphate acyltransferase (220 aa).

Helical transmembrane passes span 11–31, 70–90, 96–116, 127–147, 153–173, and 193–213; these read INVIFTLLGYLIGGIPFGYAL, LLVLILDLFKGMFAVFLSKLF, LQWMVAIASILGHCYSPFLNF, GSVVLLIPIESLIGLTVWFFV, ISSLASILGVGTATVLIFFVP, and MVLIFIFTLIKHAGNIFNLLA.

It belongs to the PlsY family. Probably interacts with PlsX.

The protein localises to the cell inner membrane. It carries out the reaction an acyl phosphate + sn-glycerol 3-phosphate = a 1-acyl-sn-glycero-3-phosphate + phosphate. Its pathway is lipid metabolism; phospholipid metabolism. Functionally, catalyzes the transfer of an acyl group from acyl-phosphate (acyl-PO(4)) to glycerol-3-phosphate (G3P) to form lysophosphatidic acid (LPA). This enzyme utilizes acyl-phosphate as fatty acyl donor, but not acyl-CoA or acyl-ACP. This is Glycerol-3-phosphate acyltransferase from Helicobacter pylori (strain HPAG1).